The chain runs to 548 residues: Chaperonin GroEL (548 aa).

ATP is bound by residues 30–33 (TLGP), Lys-51, 87–91 (DGTTT), Gly-415, 479–481 (NAA), and Asp-495.

It belongs to the chaperonin (HSP60) family. In terms of assembly, forms a cylinder of 14 subunits composed of two heptameric rings stacked back-to-back. Interacts with the co-chaperonin GroES.

Its subcellular location is the cytoplasm. It catalyses the reaction ATP + H2O + a folded polypeptide = ADP + phosphate + an unfolded polypeptide.. In terms of biological role, together with its co-chaperonin GroES, plays an essential role in assisting protein folding. The GroEL-GroES system forms a nano-cage that allows encapsulation of the non-native substrate proteins and provides a physical environment optimized to promote and accelerate protein folding. In Pseudomonas fluorescens (strain Pf0-1), this protein is Chaperonin GroEL.